We begin with the raw amino-acid sequence, 123 residues long: Large ribosomal subunit protein bL19c (123 aa).

The protein belongs to the bacterial ribosomal protein bL19 family.

It localises to the plastid. The protein localises to the chloroplast. The protein is Large ribosomal subunit protein bL19c (rpl19) of Porphyra purpurea (Red seaweed).